The sequence spans 355 residues: Phospho-N-acetylmuramoyl-pentapeptide-transferase (355 aa).

A run of 10 helical transmembrane segments spans residues 3 to 23 (GVLI…PWVI), 56 to 76 (VIIV…GIGF), 80 to 100 (GLLV…DDYI), 120 to 140 (AAVA…AGLL), 152 to 172 (TSLT…IAAT), 185 to 205 (LAAG…FWQF), 224 to 244 (PLDV…FLWW), 251 to 271 (IFMG…IAIV), 276 to 296 (LLLV…MIQV), and 330 to 350 (FWIV…AEFL).

Belongs to the glycosyltransferase 4 family. MraY subfamily. Requires Mg(2+) as cofactor.

Its subcellular location is the cell membrane. It carries out the reaction UDP-N-acetyl-alpha-D-muramoyl-L-alanyl-gamma-D-glutamyl-meso-2,6-diaminopimeloyl-D-alanyl-D-alanine + di-trans,octa-cis-undecaprenyl phosphate = di-trans,octa-cis-undecaprenyl diphospho-N-acetyl-alpha-D-muramoyl-L-alanyl-D-glutamyl-meso-2,6-diaminopimeloyl-D-alanyl-D-alanine + UMP. It participates in cell wall biogenesis; peptidoglycan biosynthesis. Functionally, catalyzes the initial step of the lipid cycle reactions in the biosynthesis of the cell wall peptidoglycan: transfers peptidoglycan precursor phospho-MurNAc-pentapeptide from UDP-MurNAc-pentapeptide onto the lipid carrier undecaprenyl phosphate, yielding undecaprenyl-pyrophosphoryl-MurNAc-pentapeptide, known as lipid I. The sequence is that of Phospho-N-acetylmuramoyl-pentapeptide-transferase from Frankia alni (strain DSM 45986 / CECT 9034 / ACN14a).